Here is a 205-residue protein sequence, read N- to C-terminus: Ephrin-A1 (205 aa).

The first 17 residues, 1 to 17, serve as a signal peptide directing secretion; the sequence is MEFLWAPLLGLCCSLAA. Residues 18–161 form the Ephrin RBD domain; sequence ADRHIVFWNS…THNPQAHVNP (144 aa). N26 is a glycosylation site (N-linked (GlcNAc...) asparagine). Cystine bridges form between C51/C92 and C80/C140. S182 is lipidated: GPI-anchor amidated serine. A propeptide spans 183–205 (removed in mature form); it reads AAPRLFPLVWAVLLLPLLLLQSQ.

This sequence belongs to the ephrin family. In terms of assembly, monomer. Homodimer. Forms heterodimers with EPHA2. Binds to the receptor tyrosine kinases EPHA2, EPHA3, EPHA4, EPHA5, EPHA6 and EPHA7. Also binds with low affinity to EPHA1. Undergoes proteolysis by a metalloprotease to give rise to a soluble monomeric form. In terms of processing, N-Glycosylation is required for binding to EPHA2 receptor and inducing its internalization. Expressed in myogenic progenitor cells.

Its subcellular location is the cell membrane. The protein localises to the secreted. In terms of biological role, cell surface GPI-bound ligand for Eph receptors, a family of receptor tyrosine kinases which are crucial for migration, repulsion and adhesion during neuronal, vascular and epithelial development. Binds promiscuously Eph receptors residing on adjacent cells, leading to contact-dependent bidirectional signaling into neighboring cells. Plays an important role in angiogenesis and tumor neovascularization. The recruitment of VAV2, VAV3 and PI3-kinase p85 subunit by phosphorylated EPHA2 is critical for EFNA1-induced RAC1 GTPase activation and vascular endothelial cell migration and assembly. Exerts anti-oncogenic effects in tumor cells through activation and down-regulation of EPHA2. Activates EPHA2 by inducing tyrosine phosphorylation which leads to its internalization and degradation. Acts as a negative regulator in the tumorigenesis of gliomas by down-regulating EPHA2 and FAK. Can evoke collapse of embryonic neuronal growth cone and regulates dendritic spine morphogenesis. The sequence is that of Ephrin-A1 (Efna1) from Mus musculus (Mouse).